The following is a 392-amino-acid chain: ER-bound oxygenase mpaB (392 aa).

Topologically, residues 1–21 (MSLPLPPALSELARALPYSRT) are lumenal. Residues 22-41 (QWLPIFVGFLIGYPILIRAL) form a helical membrane-spanning segment. The Cytoplasmic portion of the chain corresponds to 42–392 (RYKRHGEMKK…WSKYHATTND (351 aa)). The tract at residues 352–376 (DLGQKKGPQGDPGNDEGIKDLKDGE) is disordered. The span at 367–376 (EGIKDLKDGE) shows a compositional bias: basic and acidic residues.

Belongs to the mpaB oxygenase family.

Its subcellular location is the endoplasmic reticulum membrane. It catalyses the reaction 4-farnesyl-3,5-dihydroxy-6-methylphthalide + AH2 + 2 O2 = (4E,8E)-10-(4,6-dihydroxy-7-methyl-3-oxo-1,3-dihydro-2-benzofuran-5-yl)-4,8-dimethyldeca-4,8-dienoate + acetone + A + H2O + H(+). The protein operates within secondary metabolite biosynthesis; terpenoid biosynthesis. ER-bound oxygenase; part of the gene cluster that mediates the biosynthesis of mycophenolic acid (MPA), the first isolated antibiotic natural product in the world obtained from a culture of Penicillium brevicompactum in 1893. MpaB catalyzes the oxidative cleavage the C19-C20 double bond in farnesyl-DHMP (FDHMP) to yield FDHMP-3C via a mycophenolic aldehyde intermediate. The first step of the pathway is the synthesis of 5-methylorsellinic acid (5MOA) by the cytosolic polyketide synthase mpaC. 5MOA is then converted to the phthalide compound 5,7-dihydroxy-4,6-dimethylphthalide (DHMP) by the endoplasmic reticulum-bound cytochrome P450 monooxygenase mpaDE. MpaDE first catalyzes hydroxylation of 5-MOA to 4,6-dihydroxy-2-(hydroxymethyl)-3-methylbenzoic acid (DHMB). MpaDE then acts as a lactone synthase that catalyzes the ring closure to convert DHMB into DHMP. The next step is the prenylation of DHMP by the Golgi apparatus-associated prenyltransferase mpaA to yield farnesyl-DHMP (FDHMP). The ER-bound oxygenase mpaB then mediates the oxidative cleavage the C19-C20 double bond in FDHMP to yield FDHMP-3C via a mycophenolic aldehyde intermediate. The O-methyltransferase mpaG catalyzes the methylation of FDHMP-3C to yield MFDHMP-3C. After the cytosolic methylation of FDHMP-3C, MFDHMP-3C enters into peroxisomes probably via free diffusion due to its low molecular weight. Upon a peroxisomal CoA ligation reaction, catalyzed by a beta-oxidation component enzyme acyl-CoA ligase ACL891, MFDHMP-3C-CoA would then be restricted to peroxisomes for the following beta-oxidation pathway steps. The peroxisomal beta-oxidation machinery than converts MFDHMP-3C-CoA into MPA_CoA, via a beta-oxidation chain-shortening process. Finally mpaH acts as a peroxisomal acyl-CoA hydrolase with high substrate specificity toward MPA-CoA to release the final product MPA. This chain is ER-bound oxygenase mpaB, found in Penicillium brevicompactum.